The chain runs to 178 residues: Large ribosomal subunit protein eL20 (178 aa).

The protein belongs to the eukaryotic ribosomal protein eL20 family.

The chain is Large ribosomal subunit protein eL20 (RPL18A) from Oryza sativa subsp. japonica (Rice).